The following is a 40-amino-acid chain: Accessory gland-specific peptide 57Db (40 aa).

The first 17 residues, Met1–Ala17, serve as a signal peptide directing secretion.

Lumen fluid of male accessory glands, becomes seminal fluid.

Its subcellular location is the secreted. In terms of biological role, transferred from male to female during mating and may affect egglaying and behavior after mating. This is Accessory gland-specific peptide 57Db (Mst57Db) from Drosophila melanogaster (Fruit fly).